A 293-amino-acid chain; its full sequence is Methylsterol monooxygenase 1 (293 aa).

2 helical membrane passes run 55 to 75 and 100 to 120; these read LIVH…FQFI and VLLF…YYFT. Residues 145 to 274 form the Fatty acid hydroxylase domain; sequence CAVIEDTWHY…FTWWDRIFGT (130 aa). Residues 157-161 carry the Histidine box-1 motif; sequence HRLLH. Residues 170-174 carry the Histidine box-2 motif; the sequence is HKVHH. The chain crosses the membrane as a helical span at residues 199-219; that stretch reads FFIGIVLLCDHVILLWAWVTI. The Histidine box-3 motif lies at 249–255; that stretch reads HHDFHHM.

The protein belongs to the sterol desaturase family. Requires Fe cation as cofactor. In terms of processing, ubiquitinated by MARCHF6, leading to proteasomal degradation.

It localises to the endoplasmic reticulum membrane. It carries out the reaction 4,4-dimethyl-5alpha-cholest-7-en-3beta-ol + 6 Fe(II)-[cytochrome b5] + 3 O2 + 5 H(+) = 4alpha-carboxy-4beta-methyl-5alpha-cholest-7-ene-3beta-ol + 6 Fe(III)-[cytochrome b5] + 4 H2O. It catalyses the reaction 4,4-dimethyl-5alpha-cholesta-8,24-dien-3beta-ol + 6 Fe(II)-[cytochrome b5] + 3 O2 + 5 H(+) = 4beta-methylzymosterol-4alpha-carboxylate + 6 Fe(III)-[cytochrome b5] + 4 H2O. The catalysed reaction is 4alpha-methylzymosterol + 6 Fe(II)-[cytochrome b5] + 3 O2 + 5 H(+) = 4alpha-carboxyzymosterol + 6 Fe(III)-[cytochrome b5] + 4 H2O. The enzyme catalyses 4alpha-methyl-5alpha-cholest-7-en-3beta-ol + 6 Fe(II)-[cytochrome b5] + 3 O2 + 5 H(+) = 4alpha-carboxy-5alpha-cholest-7-en-3beta-ol + 6 Fe(III)-[cytochrome b5] + 4 H2O. It carries out the reaction 4,4-dimethyl-5alpha-cholest-8-en-3beta-ol + 6 Fe(II)-[cytochrome b5] + 3 O2 + 5 H(+) = 4alpha-carboxy-4beta-methyl-5alpha-cholest-8-en-3beta-ol + 6 Fe(III)-[cytochrome b5] + 4 H2O. It catalyses the reaction 4alpha-methyl-5alpha-cholest-8-en-3beta-ol + 6 Fe(II)-[cytochrome b5] + 3 O2 + 5 H(+) = 4alpha-carboxy-5alpha-cholest-8-ene-3beta-ol + 6 Fe(III)-[cytochrome b5] + 4 H2O. The protein operates within steroid biosynthesis; zymosterol biosynthesis; zymosterol from lanosterol: step 3/6. Its pathway is steroid biosynthesis; cholesterol biosynthesis. Its function is as follows. Catalyzes the three-step monooxygenation required for the demethylation of 4,4-dimethyl and 4alpha-methylsterols, which can be subsequently metabolized to cholesterol. The polypeptide is Methylsterol monooxygenase 1 (MSMO1) (Pongo abelii (Sumatran orangutan)).